The following is an 88-amino-acid chain: Small ribosomal subunit protein bS20 (88 aa).

A compositionally biased stretch (basic and acidic residues) spans 1–23 (MPNTKSAEKALRVADANRQENRR). Positions 1–29 (MPNTKSAEKALRVADANRQENRRAKSQVK) are disordered.

It belongs to the bacterial ribosomal protein bS20 family.

Its function is as follows. Binds directly to 16S ribosomal RNA. The protein is Small ribosomal subunit protein bS20 of Dehalococcoides mccartyi (strain ATCC BAA-2100 / JCM 16839 / KCTC 5957 / BAV1).